The following is a 377-amino-acid chain: tRNA-specific 2-thiouridylase MnmA (377 aa).

Residues 8 to 15 (GMSGGVDS) and Met-34 each bind ATP. Residues 94-96 (NPD) form an interaction with target base in tRNA region. Cys-99 serves as the catalytic Nucleophile. An intrachain disulfide couples Cys-99 to Cys-201. Gly-123 serves as a coordination point for ATP. Residues 151–153 (KDQ) are interaction with tRNA. Cys-201 serves as the catalytic Cysteine persulfide intermediate. An interaction with tRNA region spans residues 315–316 (RY).

This sequence belongs to the MnmA/TRMU family.

The protein localises to the cytoplasm. The catalysed reaction is S-sulfanyl-L-cysteinyl-[protein] + uridine(34) in tRNA + AH2 + ATP = 2-thiouridine(34) in tRNA + L-cysteinyl-[protein] + A + AMP + diphosphate + H(+). Functionally, catalyzes the 2-thiolation of uridine at the wobble position (U34) of tRNA, leading to the formation of s(2)U34. This chain is tRNA-specific 2-thiouridylase MnmA, found in Acinetobacter baumannii (strain AB307-0294).